The following is a 513-amino-acid chain: MEPAGPAPGRLGPLLLCLLLSASCFCTGATGKELKVTQPEKSVSVAAGDSTVLNCTLTSLLPVGPIRWYRGVGPSRLLIYSFAGEYVPRIRNVSDTTKRNNMDFSIRISNVTPADAGIYYCVKFQKGSSEPDTEIQSGGGTEVYVLAKPSPPEVSGPADRGIPDQKVNFTCKSHGFSPRNITLKWFKDGQELHPLETTVNPSGKNVSYNISSTVRVVLNSMDVNSKVICEVAHITLDRSPLRGIANLSNFIRVSPTVKVTQQSPTSMNQVNLTCRAERFYPEDLQLIWLENGNVSRNDTPKNLTKNTDGTYNYTSLFLVNSSAHREDVVFTCQVKHDQQPAITRNHTVLGFAHSSDQGSMQTFPDNNATHNWNVFIGVGVACALLVVLLMAALYLLRIKQKKAKGSTSSTRLHEPEKNAREITQVQSLIQDTNDINDITYADLNLPKEKKPAPRAPEPNNHTEYASIETGKVPRPEDTLTYADLDMVHLSRAQPAPKPEPSFSEYASVQVQRK.

The first 31 residues, 1–31 (MEPAGPAPGRLGPLLLCLLLSASCFCTGATG), serve as a signal peptide directing secretion. The Ig-like V-type domain maps to 32–137 (KELKVTQPEK…SSEPDTEIQS (106 aa)). Topologically, residues 32–373 (KELKVTQPEK…PDNNATHNWN (342 aa)) are extracellular. 14 N-linked (GlcNAc...) asparagine glycosylation sites follow: Asn54, Asn92, Asn168, Asn180, Asn205, Asn209, Asn246, Asn271, Asn293, Asn302, Asn312, Asn320, Asn345, and Asn367. The cysteines at positions 55 and 121 are disulfide-linked. Ig-like C1-type domains follow at residues 149 to 248 (PSPP…ANLS) and 255 to 343 (PTVK…PAIT). Cysteines 171 and 229 form a disulfide. Cys274 and Cys332 are joined by a disulfide. The chain crosses the membrane as a helical span at residues 374-394 (VFIGVGVACALLVVLLMAALY). Residues 395 to 511 (LLRIKQKKAK…FSEYASVQVQ (117 aa)) are Cytoplasmic-facing. Residue Tyr440 is modified to Phosphotyrosine; by Tyr-kinases. The SH2-binding motif lies at 440-443 (YADL). Residues 444–513 (NLPKEKKPAP…EYASVQVQRK (70 aa)) form a disordered region. The short motif at 450–455 (KPAPRA) is the SH3-binding element. Phosphotyrosine; by Tyr-kinases occurs at positions 464, 481, and 505. 3 short sequence motifs (SH2-binding) span residues 464 to 467 (YASI), 481 to 484 (YADL), and 505 to 508 (YASV). Residues 504-513 (EYASVQVQRK) show a composition bias toward polar residues.

As to quaternary structure, binds PTPN11 when tyrosine-phosphorylated, except in macrophages, where it primarily binds PTPN6. Binds GRB2 vitro. Binds FGR. Binds JAK2 irrespective of its phosphorylation status and forms a stable complex. Binds SCAP1 and/or SCAP2. The resulting complex recruits FYB1. Binds PTK2B. Interacts with TRIM2. Post-translationally, N-glycosylated. Phosphorylated on tyrosine residues. As to expression, highly expressed in cerebral cortex, brain, spinal cord, cerebellum and spleen, and at much lower levels in kidney, thymus, heart, lung and liver. Within the cerebellum, highly expressed throughout the molecular layer, and in synaptic glomeruli in the granule cell layer. Detected in neurons of the hippocampus and dentate gyrus, and in olfactory bulb. Not detected in Purkinje cells. Highly expressed in the plexiform layers, optic fiber layer and the outer segments of the photoreceptor layer in the retina. Highly expressed in macrophages. Isoform 3 is detected at very low levels in all tissues tested.

It is found in the membrane. Functionally, immunoglobulin-like cell surface receptor for CD47. Acts as a docking protein and induces translocation of PTPN6, PTPN11 and other binding partners from the cytosol to the plasma membrane. Supports adhesion of cerebellar neurons, neurite outgrowth and glial cell attachment. May play a key role in intracellular signaling during synaptogenesis and in synaptic function. Involved in the negative regulation of receptor tyrosine kinase-coupled cellular responses induced by cell adhesion, growth factors or insulin. Mediates negative regulation of phagocytosis, mast cell activation and dendritic cell activation. CD47 binding prevents maturation of immature dendritic cells and inhibits cytokine production by mature dendritic cells. Plays a role in antiviral immunity and limits new world arenavirus infection by decreasing virus internalization. Receptor for THBS1. Interaction with THBS1 stimulates phosphorylation of SIRPA. In response to THBS1, involved in ROS signaling in non-phagocytic cells, stimulating NADPH oxidase-derived ROS production. The protein is Tyrosine-protein phosphatase non-receptor type substrate 1 (Sirpa) of Mus musculus (Mouse).